The sequence spans 125 residues: Transmembrane protein 14EP (125 aa).

The next 2 helical transmembrane spans lie at 9-29 and 81-101; these read VPLYWLGFVYAALAALGGISG and ILTLWNIYACGFSCRCLLIVS.

Belongs to the TMEM14 family.

It localises to the membrane. In Homo sapiens (Human), this protein is Transmembrane protein 14EP (TMEM14EP).